Consider the following 121-residue polypeptide: Small ribosomal subunit protein bS16 (121 aa).

Residues 85–110 (REARNNPKKAEPGKKAQERAAERAAK) show a composition bias toward basic and acidic residues. Positions 85-121 (REARNNPKKAEPGKKAQERAAERAAKAAEASEAASAE) are disordered. A compositionally biased stretch (low complexity) spans 111–121 (AAEASEAASAE).

It belongs to the bacterial ribosomal protein bS16 family.

The polypeptide is Small ribosomal subunit protein bS16 (Azorhizobium caulinodans (strain ATCC 43989 / DSM 5975 / JCM 20966 / LMG 6465 / NBRC 14845 / NCIMB 13405 / ORS 571)).